The following is a 394-amino-acid chain: Elongation factor Tu 2 (394 aa).

The 195-residue stretch at 10-204 folds into the tr-type G domain; sequence KPHVNVGTIG…ALDSYIPQPE (195 aa). The G1 stretch occupies residues 19–26; sequence GHVDHGKT. 19 to 26 lines the GTP pocket; it reads GHVDHGKT. Thr-26 is a binding site for Mg(2+). Residues 60 to 64 are G2; the sequence is GITIN. The interval 81 to 84 is G3; it reads DCPG. GTP is bound by residues 81 to 85 and 136 to 139; these read DCPGH and NKCD. The segment at 136 to 139 is G4; sequence NKCD. The G5 stretch occupies residues 174 to 176; that stretch reads SAL.

Belongs to the TRAFAC class translation factor GTPase superfamily. Classic translation factor GTPase family. EF-Tu/EF-1A subfamily. Monomer.

It localises to the cytoplasm. The enzyme catalyses GTP + H2O = GDP + phosphate + H(+). In terms of biological role, GTP hydrolase that promotes the GTP-dependent binding of aminoacyl-tRNA to the A-site of ribosomes during protein biosynthesis. The sequence is that of Elongation factor Tu 2 from Yersinia pestis bv. Antiqua (strain Antiqua).